A 525-amino-acid polypeptide reads, in one-letter code: uncharacterized protein (525 aa).

The signal sequence occupies residues 1–21; sequence MLECLSALLVLFAGGGGSVLA. Residues 22-448 are Extracellular-facing; the sequence is AVQSKTVADP…ISAASQLDER (427 aa). The interval 242–264 is disordered; the sequence is KVSSENCSKDTDDKSGSKKERNT. A helical membrane pass occupies residues 449-469; the sequence is IFIFTAITVSITTLMMLGFSY. At 470–525 the chain is on the cytoplasmic side; the sequence is RSRVSFRDHSIDDSDDDNDWSDDEVEFDEEYFYSLPVSIPEKGISLDKMAQQLGVE.

The protein localises to the membrane. This is an uncharacterized protein from Saccharomyces cerevisiae (strain RM11-1a) (Baker's yeast).